A 250-amino-acid polypeptide reads, in one-letter code: tRNA (guanine-N(1)-)-methyltransferase (250 aa).

Residues glycine 112 and 132–137 (IGDFVL) contribute to the S-adenosyl-L-methionine site.

It belongs to the RNA methyltransferase TrmD family. Homodimer.

The protein resides in the cytoplasm. The enzyme catalyses guanosine(37) in tRNA + S-adenosyl-L-methionine = N(1)-methylguanosine(37) in tRNA + S-adenosyl-L-homocysteine + H(+). In terms of biological role, specifically methylates guanosine-37 in various tRNAs. The chain is tRNA (guanine-N(1)-)-methyltransferase from Marinomonas sp. (strain MWYL1).